Reading from the N-terminus, the 358-residue chain is 3-dehydroquinate synthase (358 aa).

NAD(+) is bound by residues 70 to 75, 104 to 108, 128 to 129, Lys-141, Lys-150, and 168 to 171; these read DGEQYK, GVVGD, TT, and CLNT. Zn(2+) contacts are provided by Glu-183, His-246, and His-263.

Belongs to the sugar phosphate cyclases superfamily. Dehydroquinate synthase family. Co(2+) is required as a cofactor. Requires Zn(2+) as cofactor. It depends on NAD(+) as a cofactor.

It localises to the cytoplasm. It carries out the reaction 7-phospho-2-dehydro-3-deoxy-D-arabino-heptonate = 3-dehydroquinate + phosphate. It functions in the pathway metabolic intermediate biosynthesis; chorismate biosynthesis; chorismate from D-erythrose 4-phosphate and phosphoenolpyruvate: step 2/7. Functionally, catalyzes the conversion of 3-deoxy-D-arabino-heptulosonate 7-phosphate (DAHP) to dehydroquinate (DHQ). The polypeptide is 3-dehydroquinate synthase (Shewanella sediminis (strain HAW-EB3)).